The following is a 614-amino-acid chain: Glutamyl-tRNA(Gln) amidotransferase subunit E (614 aa).

It belongs to the GatB/GatE family. GatE subfamily. In terms of assembly, heterodimer of GatD and GatE.

The enzyme catalyses L-glutamyl-tRNA(Gln) + L-glutamine + ATP + H2O = L-glutaminyl-tRNA(Gln) + L-glutamate + ADP + phosphate + H(+). Allows the formation of correctly charged Gln-tRNA(Gln) through the transamidation of misacylated Glu-tRNA(Gln) in organisms which lack glutaminyl-tRNA synthetase. The reaction takes place in the presence of glutamine and ATP through an activated gamma-phospho-Glu-tRNA(Gln). The GatDE system is specific for glutamate and does not act on aspartate. The sequence is that of Glutamyl-tRNA(Gln) amidotransferase subunit E from Methanospirillum hungatei JF-1 (strain ATCC 27890 / DSM 864 / NBRC 100397 / JF-1).